A 382-amino-acid chain; its full sequence is Galactokinase (382 aa).

34–37 (EHTD) lines the substrate pocket. 124 to 130 (GAGLSSS) is a binding site for ATP. Residues Ser-130 and Glu-162 each coordinate Mg(2+). Residue Asp-174 is the Proton acceptor of the active site. Residue Tyr-223 coordinates substrate.

Belongs to the GHMP kinase family. GalK subfamily.

The protein resides in the cytoplasm. The catalysed reaction is alpha-D-galactose + ATP = alpha-D-galactose 1-phosphate + ADP + H(+). Its pathway is carbohydrate metabolism; galactose metabolism. Functionally, catalyzes the transfer of the gamma-phosphate of ATP to D-galactose to form alpha-D-galactose-1-phosphate (Gal-1-P). In Salmonella paratyphi B (strain ATCC BAA-1250 / SPB7), this protein is Galactokinase.